A 491-amino-acid polypeptide reads, in one-letter code: Keratin, type I cytoskeletal 39 (491 aa).

Residues 1-96 (MDTKGCTTTN…WYGEGINSNE (96 aa)) form a head region. The region spanning 96 to 407 (EKETMQILNE…SLLESSDGKR (312 aa)) is the IF rod domain. Positions 97–131 (KETMQILNERLANYLQKVRMLERENAELESKIQEE) are coil 1A. The linker 1 stretch occupies residues 132–142 (SNKELPVLCPD). The segment at 143 to 243 (YLSYYTTIEE…HKEEINSLQC (101 aa)) is coil 1B. The segment at 244-259 (QLGERLDIEVTAAPSA) is linker 12. A coil 2 region spans residues 260–403 (DLNQVLQEMR…TTYRSLLESS (144 aa)). Residues 404–491 (DGKRPCYPRA…PCFIIRPAKV (88 aa)) are tail.

The protein belongs to the intermediate filament family. In terms of assembly, heterotetramer of two type I and two type II keratins. Expressed in skin and scalp. In the hair follicle, it is present in the upper hair cuticle and the upper cortex. Also present in the in the upper portion of beard hairs (at protein level).

Its function is as follows. May play a role in late hair differentiation. The protein is Keratin, type I cytoskeletal 39 (KRT39) of Homo sapiens (Human).